The sequence spans 273 residues: Chondrolectin (273 aa).

The first 21 residues, 1–21, serve as a signal peptide directing secretion; that stretch reads MSRVVSLLLGAALLCGHGAFC. The Extracellular portion of the chain corresponds to 22-216; sequence RRVVSGQKVC…VVTEAGIIPN (195 aa). The C-type lectin domain maps to 35–179; the sequence is FKHPCYKMAY…CNMKHNYICK (145 aa). Intrachain disulfides connect Cys-61–Cys-178 and Cys-144–Cys-170. N-linked (GlcNAc...) asparagine glycosylation occurs at Asn-86. The helical transmembrane segment at 217 to 237 threads the bilayer; it reads LIYVVIPTIPLLLLILVAFGT. Residues 238-273 lie on the Cytoplasmic side of the membrane; that stretch reads CCFQMLHKSKGRTKTSPNQSTLWISKSTRKESGMEV. The disordered stretch occupies residues 248-273; sequence GRTKTSPNQSTLWISKSTRKESGMEV. A compositionally biased stretch (polar residues) spans 251-263; sequence KTSPNQSTLWISK.

Interacts with RABGGTB. Post-translationally, N-glycosylated. Found in spleen, testis, prostate and fetal liver. Expression limited to vascular muscle of testis, smooth muscle of prostate stroma, heart muscle, skeletal muscle, crypts of small intestine, and red pulp of spleen. B lymphocytes express isoform 2 only; peripheral blood T lymphocytes express isoform 3 only; granulocytes and monocytes express neither isoform 2 nor isoform 3. During development of T lymphocytes, bone marrow progenitor cells express isoform 2 only; thymocytes at different stages of maturation express predominantly isoform 2 and weakly isoform 3, and mature thymocytes express only isoform 2.

It localises to the cytoplasm. The protein localises to the membrane. The protein resides in the endoplasmic reticulum. It is found in the endoplasmic reticulum membrane. May play a role in the development of the nervous system such as in neurite outgrowth and elongation. May be involved in motor axon growth and guidance. The polypeptide is Chondrolectin (CHODL) (Homo sapiens (Human)).